A 441-amino-acid polypeptide reads, in one-letter code: Protein cortex (441 aa).

WD repeat units lie at residues 110 to 148, 149 to 187, 193 to 233, 235 to 276, 277 to 320, 345 to 379, and 380 to 420; these read SITS…VDQG, QTMF…QFVQ, IQIC…KSLV, IEGA…RFMK, TNEI…KLRQ, SLWS…ESHT, and GLNR…KILA. A D-box motif is present at residues 379 to 390; sequence TGLNRIRTMVFS.

Belongs to the WD repeat CORT family.

It localises to the cytoplasm. In terms of biological role, controls wing pigmentation patterning, possibly by regulating scale cell development. Probably acts as an activator of the anaphase promoting complex/cyclosome (APC/C) that promotes the ubiquitin ligase activity and substrate specificity of the APC/C. The sequence is that of Protein cortex from Biston betularia (Pepper-and-salt geometer moth).